Here is an 898-residue protein sequence, read N- to C-terminus: DNA damage-induced apoptosis suppressor protein (898 aa).

3 disordered regions span residues 191 to 210 (CGSQ…DSDL), 643 to 670 (SINT…HEGS), and 710 to 749 (YPIN…FEES). Polar residues-rich tracts occupy residues 643 to 664 (SINT…PSSS) and 710 to 725 (YPIN…KPSL). The span at 726-741 (QSISPSRYSRPRSQSD) shows a compositional bias: low complexity.

In terms of tissue distribution, highly expressed in the testis, spleen and heart. Expressed at high levels in the primary spermatocytes and to a lesser extent in the round spermatids. Also found in the bone marrow, brain, lung, kidney and liver.

The protein resides in the cytoplasm. The protein localises to the nucleus. May be an anti-apoptotic protein involved in DNA repair or cell survival. This is DNA damage-induced apoptosis suppressor protein (Ddias) from Mus musculus (Mouse).